The sequence spans 213 residues: Probable nicotinate-nucleotide adenylyltransferase (213 aa).

It belongs to the NadD family.

The catalysed reaction is nicotinate beta-D-ribonucleotide + ATP + H(+) = deamido-NAD(+) + diphosphate. Its pathway is cofactor biosynthesis; NAD(+) biosynthesis; deamido-NAD(+) from nicotinate D-ribonucleotide: step 1/1. In terms of biological role, catalyzes the reversible adenylation of nicotinate mononucleotide (NaMN) to nicotinic acid adenine dinucleotide (NaAD). This chain is Probable nicotinate-nucleotide adenylyltransferase, found in Escherichia coli O17:K52:H18 (strain UMN026 / ExPEC).